Here is a 265-residue protein sequence, read N- to C-terminus: Speedy protein E8 (265 aa).

Residues 1 to 80 (MGQILGKIMM…EPEKELAPEP (80 aa)) are disordered. A compositionally biased stretch (acidic residues) spans 66–80 (DESDDEPEKELAPEP).

Belongs to the Speedy/Ringo family.

This is Speedy protein E8 from Homo sapiens (Human).